Consider the following 459-residue polypeptide: Putrescine aminotransferase (459 aa).

Pyridoxal 5'-phosphate is bound by residues 150–151 and Q274; that span reads GT. The residue at position 300 (K300) is an N6-(pyridoxal phosphate)lysine. Residue T332 coordinates pyridoxal 5'-phosphate.

Belongs to the class-III pyridoxal-phosphate-dependent aminotransferase family. Putrescine aminotransferase subfamily. Pyridoxal 5'-phosphate is required as a cofactor.

It carries out the reaction an alkane-alpha,omega-diamine + 2-oxoglutarate = an omega-aminoaldehyde + L-glutamate. The catalysed reaction is putrescine + 2-oxoglutarate = 1-pyrroline + L-glutamate + H2O. The enzyme catalyses cadaverine + 2-oxoglutarate = 5-aminopentanal + L-glutamate. Its pathway is amine and polyamine degradation; putrescine degradation; 4-aminobutanal from putrescine (transaminase route): step 1/1. Catalyzes the aminotransferase reaction from putrescine to 2-oxoglutarate, leading to glutamate and 4-aminobutanal, which spontaneously cyclizes to form 1-pyrroline. This is the first step in one of two pathways for putrescine degradation, where putrescine is converted into 4-aminobutanoate (gamma-aminobutyrate or GABA) via 4-aminobutanal. Also functions as a cadaverine transaminase in a a L-lysine degradation pathway to succinate that proceeds via cadaverine, glutarate and L-2-hydroxyglutarate. The sequence is that of Putrescine aminotransferase from Salmonella paratyphi A (strain ATCC 9150 / SARB42).